Consider the following 295-residue polypeptide: Methionine aminopeptidase (295 aa).

A substrate-binding site is contributed by H62. A divalent metal cation-binding residues include D82, D93, and H153. H161 lines the substrate pocket. E187 and E280 together coordinate a divalent metal cation.

The protein belongs to the peptidase M24A family. Methionine aminopeptidase archaeal type 2 subfamily. In terms of assembly, monomer. Requires Co(2+) as cofactor. Zn(2+) serves as cofactor. The cofactor is Mn(2+). It depends on Fe(2+) as a cofactor.

It carries out the reaction Release of N-terminal amino acids, preferentially methionine, from peptides and arylamides.. Functionally, removes the N-terminal methionine from nascent proteins. The N-terminal methionine is often cleaved when the second residue in the primary sequence is small and uncharged (Met-Ala-, Cys, Gly, Pro, Ser, Thr, or Val). In Pyrococcus abyssi (strain GE5 / Orsay), this protein is Methionine aminopeptidase.